The chain runs to 400 residues: Putative lysosomal acid lipase/cholesteryl ester hydrolase (400 aa).

Residues 1 to 17 (MWRLIIIAILFQGLVNS) form the signal peptide. Asn-34, Asn-129, and Asn-159 each carry an N-linked (GlcNAc...) asparagine glycan. Residues 78–378 (PAVFLQHGLL…EWEHLDFIWG (301 aa)) form the AB hydrolase-1 domain. The Charge relay system role is filled by Ser-172. N-linked (GlcNAc...) asparagine glycosylation is present at Asn-271. The active-site Charge relay system is the His-372.

Belongs to the AB hydrolase superfamily. Lipase family. In terms of tissue distribution, expressed by the venom gland.

It localises to the secreted. It catalyses the reaction a sterol ester + H2O = a sterol + a fatty acid + H(+). In terms of biological role, in physiological conditions, is crucial for intracellular hydrolysis of cholesteryl esters and triglycerides that have been internalized via receptor-mediated endocytosis of lipoprotein particles. In venom, the biological contribution is unknown. This is Putative lysosomal acid lipase/cholesteryl ester hydrolase from Crotalus adamanteus (Eastern diamondback rattlesnake).